The sequence spans 125 residues: Small ribosomal subunit protein uS12 (125 aa).

The disordered stretch occupies residues 1 to 26; that stretch reads MPTINQLVRKSRKTVKAQSDSPALKN. 3-methylthioaspartic acid is present on D89.

Belongs to the universal ribosomal protein uS12 family. Part of the 30S ribosomal subunit. Contacts proteins S8 and S17. May interact with IF1 in the 30S initiation complex.

In terms of biological role, with S4 and S5 plays an important role in translational accuracy. Functionally, interacts with and stabilizes bases of the 16S rRNA that are involved in tRNA selection in the A site and with the mRNA backbone. Located at the interface of the 30S and 50S subunits, it traverses the body of the 30S subunit contacting proteins on the other side and probably holding the rRNA structure together. The combined cluster of proteins S8, S12 and S17 appears to hold together the shoulder and platform of the 30S subunit. The protein is Small ribosomal subunit protein uS12 of Clostridium tetani (strain Massachusetts / E88).